The sequence spans 34 residues: MSGELLNAALLSFGLIFVGWALGALLLKIQGAEE.

A helical transmembrane segment spans residues 9 to 29 (ALLSFGLIFVGWALGALLLKI).

It belongs to the PetM family. As to quaternary structure, the 4 large subunits of the cytochrome b6-f complex are cytochrome b6, subunit IV (17 kDa polypeptide, PetD), cytochrome f and the Rieske protein, while the 4 small subunits are PetG, PetL, PetM and PetN. The complex functions as a dimer.

Its subcellular location is the cellular thylakoid membrane. Its function is as follows. Component of the cytochrome b6-f complex, which mediates electron transfer between photosystem II (PSII) and photosystem I (PSI), cyclic electron flow around PSI, and state transitions. The chain is Cytochrome b6-f complex subunit 7 from Nostoc sp. (strain PCC 7120 / SAG 25.82 / UTEX 2576).